The following is a 308-amino-acid chain: Pseudouridine-5'-phosphate glycosidase (308 aa).

E28 serves as the catalytic Proton donor. K89 and V109 together coordinate substrate. D141 contacts Mn(2+). 143–145 (SAD) serves as a coordination point for substrate. Catalysis depends on K162, which acts as the Nucleophile.

This sequence belongs to the pseudouridine-5'-phosphate glycosidase family. In terms of assembly, homotrimer. It depends on Mn(2+) as a cofactor.

It carries out the reaction D-ribose 5-phosphate + uracil = psi-UMP + H2O. In terms of biological role, catalyzes the reversible cleavage of pseudouridine 5'-phosphate (PsiMP) to ribose 5-phosphate and uracil. Functions biologically in the cleavage direction, as part of a pseudouridine degradation pathway. In Brachyspira hyodysenteriae (strain ATCC 49526 / WA1), this protein is Pseudouridine-5'-phosphate glycosidase.